Reading from the N-terminus, the 837-residue chain is Leucine-zipper-like transcriptional regulator 1 (837 aa).

N-acetylalanine is present on Ala-2. Kelch repeat units lie at residues 76 to 125 (AIYV…VYGS), 127 to 182 (MFVF…VYSD), 184 to 235 (LWIF…VCRD), 236 to 282 (KMFV…QRRY), 292 to 338 (HLYV…PERA), and 396 to 447 (AMYI…FVLG). The tract at residues 324–352 (SSDSEVGGAEMPERASSSEDASTLTSEER) is disordered. BTB domains are found at residues 440–534 (CDVE…KYPR) and 664–733 (CDIT…NMPP).

Belongs to the LZTR1 family. Homodimer. Component of the BCR(LZTR1) E3 ubiquitin ligase complex, at least composed of CUL3, LZTR1 and RBX1. Interacts with Ras (K-Ras/KRAS, N-Ras/NRAS and H-Ras/HRAS). Interacts with RAF1. Interacts with SHOC2. Interacts with PPP1CB. In terms of processing, phosphorylated on tyrosine upon induction of apoptosis, leading to its degradation by the proteasome. Widely expressed.

The protein resides in the endomembrane system. It is found in the recycling endosome. It localises to the golgi apparatus. It functions in the pathway protein modification; protein ubiquitination. Substrate-specific adapter of a BCR (BTB-CUL3-RBX1) E3 ubiquitin-protein ligase complex that mediates ubiquitination of Ras (K-Ras/KRAS, N-Ras/NRAS and H-Ras/HRAS). Is a negative regulator of RAS-MAPK signaling that acts by controlling Ras levels and decreasing Ras association with membranes. The sequence is that of Leucine-zipper-like transcriptional regulator 1 from Mus musculus (Mouse).